Consider the following 54-residue polypeptide: Photosystem II reaction center protein L (54 aa).

Residues 33–53 form a helical membrane-spanning segment; that stretch reads SLFWGLLLIFVLAVLFSSYIF.

It belongs to the PsbL family. In terms of assembly, PSII is composed of 1 copy each of membrane proteins PsbA, PsbB, PsbC, PsbD, PsbE, PsbF, PsbH, PsbI, PsbJ, PsbK, PsbL, PsbM, PsbT, PsbX, PsbY, PsbZ, Psb30/Ycf12, at least 3 peripheral proteins of the oxygen-evolving complex and a large number of cofactors. It forms dimeric complexes.

It is found in the plastid. It localises to the chloroplast thylakoid membrane. Its function is as follows. One of the components of the core complex of photosystem II (PSII). PSII is a light-driven water:plastoquinone oxidoreductase that uses light energy to abstract electrons from H(2)O, generating O(2) and a proton gradient subsequently used for ATP formation. It consists of a core antenna complex that captures photons, and an electron transfer chain that converts photonic excitation into a charge separation. This subunit is found at the monomer-monomer interface and is required for correct PSII assembly and/or dimerization. The chain is Photosystem II reaction center protein L from Stigeoclonium helveticum (Green alga).